Here is a 273-residue protein sequence, read N- to C-terminus: Shikimate kinase (273 aa).

An ATP-binding site is contributed by 85 to 95 (PVGKGLKSSSA).

This sequence belongs to the GHMP kinase family. Archaeal shikimate kinase subfamily.

It is found in the cytoplasm. It catalyses the reaction shikimate + ATP = 3-phosphoshikimate + ADP + H(+). Its pathway is metabolic intermediate biosynthesis; chorismate biosynthesis; chorismate from D-erythrose 4-phosphate and phosphoenolpyruvate: step 5/7. This chain is Shikimate kinase, found in Pyrococcus furiosus (strain ATCC 43587 / DSM 3638 / JCM 8422 / Vc1).